The sequence spans 246 residues: MKYLVDTHAHTIASTHAYSTVHDYIAVAKQKGLKLFAITDHGPDMADAPHFWHFVNLRVLPRIVDGVGILRGIEANIKNDAGEIDYFGDYLQELDIVLAGFHEPVFPPSDKQTHTQALINAIESGNVDIITHPGNPAYPIDITAVAAAAARCHVALEINNSSFEMSRKGSEANCVAIAKAVRDAGGQLVMGSDSHVAFSLGEFSQALAIIEEAEFPEERLLNKSPEALLTFLSKRGHKTLDDFAEL.

Zn(2+)-binding residues include His-8, His-10, His-16, His-41, Glu-74, His-102, His-132, Asp-193, and His-195.

The protein belongs to the PHP family. Zn(2+) is required as a cofactor.

This is Probable phosphatase Ssed_2939 from Shewanella sediminis (strain HAW-EB3).